The sequence spans 240 residues: UDP-2,3-diacylglucosamine hydrolase (240 aa).

Positions 8, 10, 41, 79, and 114 each coordinate Mn(2+). 79–80 (NR) contacts substrate. The substrate site is built by Asp122, Ser160, Asn164, Lys167, and His195. Positions 195 and 197 each coordinate Mn(2+).

The protein belongs to the LpxH family. Requires Mn(2+) as cofactor.

The protein localises to the cell inner membrane. The catalysed reaction is UDP-2-N,3-O-bis[(3R)-3-hydroxytetradecanoyl]-alpha-D-glucosamine + H2O = 2-N,3-O-bis[(3R)-3-hydroxytetradecanoyl]-alpha-D-glucosaminyl 1-phosphate + UMP + 2 H(+). The protein operates within glycolipid biosynthesis; lipid IV(A) biosynthesis; lipid IV(A) from (3R)-3-hydroxytetradecanoyl-[acyl-carrier-protein] and UDP-N-acetyl-alpha-D-glucosamine: step 4/6. Its function is as follows. Hydrolyzes the pyrophosphate bond of UDP-2,3-diacylglucosamine to yield 2,3-diacylglucosamine 1-phosphate (lipid X) and UMP by catalyzing the attack of water at the alpha-P atom. Involved in the biosynthesis of lipid A, a phosphorylated glycolipid that anchors the lipopolysaccharide to the outer membrane of the cell. The chain is UDP-2,3-diacylglucosamine hydrolase from Proteus mirabilis (strain HI4320).